We begin with the raw amino-acid sequence, 247 residues long: PF03932 family protein CutC (247 aa).

The protein belongs to the CutC family.

The protein resides in the cytoplasm. The protein is PF03932 family protein CutC of Chromobacterium violaceum (strain ATCC 12472 / DSM 30191 / JCM 1249 / CCUG 213 / NBRC 12614 / NCIMB 9131 / NCTC 9757 / MK).